We begin with the raw amino-acid sequence, 1173 residues long: WASH complex subunit 4 (1173 aa).

Position 2 is an N-acetylalanine (A2). S7 bears the Phosphoserine mark. Positions 27–56 (QLKNYGRFLEEYTSQLRRIEDALDDLIGDV) form a coiled coil. The tract at residues 705–1173 (KDLALFFSLN…STVSADPVVK (469 aa)) is sufficient for interaction with WASHC5. Residues 1141–1155 (AEENQEKKEKEEETK) show a composition bias toward basic and acidic residues. The tract at residues 1141–1173 (AEENQEKKEKEEETKTSNGDGPESTVSADPVVK) is disordered. T1154 is modified (phosphothreonine).

The protein belongs to the SWIP family. In terms of assembly, component of the WASH core complex also described as WASH regulatory complex (SHRC) composed of WASH (WASHC1, WASH2P or WASH3P), WASHC2 (WASHC2A or WASHC2C), WASHC3, WASHC4 and WASHC5. The WASH core complex associates via WASHC2 with the F-actin-capping protein dimer (formed by CAPZA1, CAPZA2 or CAPZA3 and CAPZB) in a transient or substoichiometric manner which was initially described as WASH complex.

It localises to the early endosome. Its function is as follows. Acts as a component of the WASH core complex that functions as a nucleation-promoting factor (NPF) at the surface of endosomes, where it recruits and activates the Arp2/3 complex to induce actin polymerization, playing a key role in the fission of tubules that serve as transport intermediates during endosome sorting. This is WASH complex subunit 4 from Mus musculus (Mouse).